Consider the following 506-residue polypeptide: Maturase K (506 aa).

This sequence belongs to the intron maturase 2 family. MatK subfamily.

It localises to the plastid. The protein resides in the chloroplast. Usually encoded in the trnK tRNA gene intron. Probably assists in splicing its own and other chloroplast group II introns. The protein is Maturase K of Ocimum basilicum (Sweet basil).